A 184-amino-acid chain; its full sequence is GTP cyclohydrolase 1 (184 aa).

Zn(2+) contacts are provided by Cys-75, His-78, and Cys-146.

Belongs to the GTP cyclohydrolase I family. Homomer.

It catalyses the reaction GTP + H2O = 7,8-dihydroneopterin 3'-triphosphate + formate + H(+). It participates in cofactor biosynthesis; 7,8-dihydroneopterin triphosphate biosynthesis; 7,8-dihydroneopterin triphosphate from GTP: step 1/1. The polypeptide is GTP cyclohydrolase 1 (Streptococcus pneumoniae (strain Taiwan19F-14)).